Here is a 388-residue protein sequence, read N- to C-terminus: Processive diacylglycerol beta-glucosyltransferase (388 aa).

This sequence belongs to the glycosyltransferase 28 family. UgtP subfamily.

It is found in the cell membrane. The enzyme catalyses a 1,2-diacyl-3-O-(beta-D-glucopyranosyl)-sn-glycerol + UDP-alpha-D-glucose = a 1,2-diacyl-3-O-(beta-D-Glc-(1-&gt;6)-beta-D-Glc)-sn-glycerol + UDP + H(+). It carries out the reaction a 1,2-diacyl-3-O-(beta-D-Glc-(1-&gt;6)-beta-D-Glc)-sn-glycerol + UDP-alpha-D-glucose = a 1,2-diacyl-3-O-(beta-D-Glc-(1-&gt;6)-beta-D-Glc-(1-&gt;6)-beta-D-Glc)-sn-glycerol + UDP + H(+). The catalysed reaction is a 1,2-diacyl-sn-glycerol + UDP-alpha-D-glucose = a 1,2-diacyl-3-O-(beta-D-glucopyranosyl)-sn-glycerol + UDP + H(+). The protein operates within glycolipid metabolism; diglucosyl-diacylglycerol biosynthesis. Processive glucosyltransferase involved in the biosynthesis of both the bilayer- and non-bilayer-forming membrane glucolipids. Is able to successively transfer up to three glucosyl residues to diacylglycerol (DAG), thereby catalyzing the formation of beta-monoglucosyl-DAG (3-O-(beta-D-glucopyranosyl)-1,2-diacyl-sn-glycerol), beta-diglucosyl-DAG (3-O-(beta-D-glucopyranosyl-beta-(1-&gt;6)-D-glucopyranosyl)-1,2-diacyl-sn-glycerol) and beta-triglucosyl-DAG (3-O-(beta-D-glucopyranosyl-beta-(1-&gt;6)-D-glucopyranosyl-beta-(1-&gt;6)-D-glucopyranosyl)-1,2-diacyl-sn-glycerol). Beta-diglucosyl-DAG is the predominant glycolipid found in Bacillales and is also used as a membrane anchor for lipoteichoic acid (LTA). In Bacillus cereus (strain ZK / E33L), this protein is Processive diacylglycerol beta-glucosyltransferase.